We begin with the raw amino-acid sequence, 342 residues long: MHTAEFLETEPTEISSVLAGGYNHPLLRQWQSERQLTKNMLIFPLFISDNPDDFTEIDSLPNINRIGVNRLKDYLKPLVAKGLRSVILFGVPLIPGTKDPVGTAADDPAGPVIQGIKFIREYFPELYIICDVCLCEYTSHGHCGVLYDDGTINRERSVSRLAAVAVNYAKAGAHCVAPSDMIDGRIRDIKRGLINANLAHKTFVLSYAAKFSGNLYGPFRDAACSAPSNGDRKCYQLPPAGRGLARRALERDMSEGADGIIVKPSTFYLDIMRDASEICKDLPICAYHVSGEYAMLHAAAEKGVVDLKTIAFESHQGFLRAGARLIITYLAPEFLDWLDEEN.

3 residues coordinate Zn(2+): cysteine 133, cysteine 135, and cysteine 143. Lysine 210 (schiff-base intermediate with substrate) is an active-site residue. 5-aminolevulinate is bound by residues arginine 220 and arginine 232. Serine 254 carries the post-translational modification Phosphoserine. Lysine 263 (schiff-base intermediate with substrate) is an active-site residue. The 5-aminolevulinate site is built by serine 290 and tyrosine 329.

This sequence belongs to the ALAD family. Homooctamer. Zn(2+) is required as a cofactor.

The catalysed reaction is 2 5-aminolevulinate = porphobilinogen + 2 H2O + H(+). It participates in porphyrin-containing compound metabolism; protoporphyrin-IX biosynthesis; coproporphyrinogen-III from 5-aminolevulinate: step 1/4. Its activity is regulated as follows. Inhibited by divalent lead ions. Catalyzes an early step in the biosynthesis of tetrapyrroles. Binds two molecules of 5-aminolevulinate per subunit, each at a distinct site, and catalyzes their condensation to form porphobilinogen. The polypeptide is Delta-aminolevulinic acid dehydratase (HEM2) (Saccharomyces cerevisiae (strain ATCC 204508 / S288c) (Baker's yeast)).